We begin with the raw amino-acid sequence, 343 residues long: MYNLARQLLFKLSPETSHELSLELIGAGGRLGLNAMLSKPPASLPVRVMGLDFPNPVGLAAGLDKNGEAIRGLSQLGFGFIEVGTVTPRPQPGNPKPRIFRLPEAEAIINRMGFNNHGVDALLARVEAARFKGVLGINIGKNFDTPVERADEDYLLCLDKVYHHASYVTVNVSSPNTPGLRSLQFGDSLKQLLDALRLRREDLEIMHGKRVPLAIKIAPDMTDEETALVGEAVFQAGMDAIIATNTTLGREGVAGLAHADEAGGLSGAPVRDKSTHTVKVLAQTLGGRLPIIAVGGITEGRHAAEKIEAGASLVQLYSGFIYKGPALIREAVDAIAALRSQAK.

Residues 61 to 65 and T85 contribute to the FMN site; that span reads AGLDK. K65 is a binding site for substrate. 110-114 lines the substrate pocket; that stretch reads NRMGF. FMN contacts are provided by N138 and N171. N171 contacts substrate. S174 functions as the Nucleophile in the catalytic mechanism. N176 is a substrate binding site. K216 and T244 together coordinate FMN. Position 245–246 (245–246) interacts with substrate; sequence NT. Residues G267, G296, and 317 to 318 contribute to the FMN site; that span reads YS.

The protein belongs to the dihydroorotate dehydrogenase family. Type 2 subfamily. In terms of assembly, monomer. Requires FMN as cofactor.

The protein localises to the cell membrane. It carries out the reaction (S)-dihydroorotate + a quinone = orotate + a quinol. Its pathway is pyrimidine metabolism; UMP biosynthesis via de novo pathway; orotate from (S)-dihydroorotate (quinone route): step 1/1. Catalyzes the conversion of dihydroorotate to orotate with quinone as electron acceptor. The polypeptide is Dihydroorotate dehydrogenase (quinone) (Stutzerimonas stutzeri (strain A1501) (Pseudomonas stutzeri)).